The primary structure comprises 1578 residues: FERM and PDZ domain-containing protein 1 (1578 aa).

The 79-residue stretch at 57 to 135 (TVKIDKDTLL…SLSITVVRCT (79 aa)) folds into the PDZ domain. The FERM domain occupies 181–496 (NVLKLYLENG…GYYRLLVDPV (316 aa)). 3 disordered regions span residues 555–616 (KEEQ…EEDD), 720–743 (SDSS…QGWT), and 759–831 (PLAF…VKKY). Positions 720–729 (SDSSESTASR) are enriched in polar residues. Low complexity predominate over residues 730-742 (QGGAPPAWGQQGW). The segment covering 793-811 (AEPSATSLQNKASTSSPEN) has biased composition (polar residues). Over residues 822–831 (PSRRGGVKKY) the composition is skewed to basic residues. The important for interaction with GPSM2 stretch occupies residues 924-931 (EPETMETK). 3 disordered regions span residues 950-1030 (PNNK…LASN), 1070-1194 (KYTE…QGCQ), and 1347-1374 (PQPE…SAGS). Polar residues predominate over residues 968-986 (TPHCSNPGSSGPDTAQARP). Residues 1100-1117 (TKEEPQGQLSLERDREVT) are compositionally biased toward basic and acidic residues. The span at 1139–1150 (DVSNNVSQTLDI) shows a compositional bias: polar residues.

As to quaternary structure, interacts with GPSM1. Interacts with GPSM2 (via TPR repeat region).

The protein localises to the cytoplasm. The protein resides in the cytosol. It localises to the cell membrane. Its function is as follows. Stabilizes membrane-bound GPSM1, and thereby promotes its interaction with GNAI1. The sequence is that of FERM and PDZ domain-containing protein 1 (FRMPD1) from Homo sapiens (Human).